We begin with the raw amino-acid sequence, 305 residues long: Porphobilinogen deaminase (305 aa).

At Cys-241 the chain carries S-(dipyrrolylmethanemethyl)cysteine.

It belongs to the HMBS family. As to quaternary structure, monomer. Dipyrromethane serves as cofactor.

The enzyme catalyses 4 porphobilinogen + H2O = hydroxymethylbilane + 4 NH4(+). It participates in porphyrin-containing compound metabolism; protoporphyrin-IX biosynthesis; coproporphyrinogen-III from 5-aminolevulinate: step 2/4. Tetrapolymerization of the monopyrrole PBG into the hydroxymethylbilane pre-uroporphyrinogen in several discrete steps. The protein is Porphobilinogen deaminase of Exiguobacterium sp. (strain ATCC BAA-1283 / AT1b).